We begin with the raw amino-acid sequence, 122 residues long: Large ribosomal subunit protein bL19 (122 aa).

The protein belongs to the bacterial ribosomal protein bL19 family.

Functionally, this protein is located at the 30S-50S ribosomal subunit interface and may play a role in the structure and function of the aminoacyl-tRNA binding site. The protein is Large ribosomal subunit protein bL19 of Acinetobacter baumannii (strain AB307-0294).